The sequence spans 514 residues: 2,3-bisphosphoglycerate-independent phosphoglycerate mutase (514 aa).

The Mn(2+) site is built by D13 and S63. S63 acts as the Phosphoserine intermediate in catalysis. Residues H124, 154–155, R186, R192, 258–261, and K332 each bind substrate; these read RD and RADR. 5 residues coordinate Mn(2+): D399, H403, D440, H441, and H459.

Belongs to the BPG-independent phosphoglycerate mutase family. Monomer. Mn(2+) serves as cofactor.

It carries out the reaction (2R)-2-phosphoglycerate = (2R)-3-phosphoglycerate. Its pathway is carbohydrate degradation; glycolysis; pyruvate from D-glyceraldehyde 3-phosphate: step 3/5. Functionally, catalyzes the interconversion of 2-phosphoglycerate and 3-phosphoglycerate. This Legionella pneumophila subsp. pneumophila (strain Philadelphia 1 / ATCC 33152 / DSM 7513) protein is 2,3-bisphosphoglycerate-independent phosphoglycerate mutase.